Consider the following 289-residue polypeptide: Elongation factor Ts (289 aa).

An involved in Mg(2+) ion dislocation from EF-Tu region spans residues 82–85 (TDFV).

Belongs to the EF-Ts family.

The protein resides in the cytoplasm. Functionally, associates with the EF-Tu.GDP complex and induces the exchange of GDP to GTP. It remains bound to the aminoacyl-tRNA.EF-Tu.GTP complex up to the GTP hydrolysis stage on the ribosome. This Marinobacter nauticus (strain ATCC 700491 / DSM 11845 / VT8) (Marinobacter aquaeolei) protein is Elongation factor Ts.